The sequence spans 126 residues: Histone H2B type 1-B (126 aa).

The span at 1 to 12 shows a compositional bias: low complexity; the sequence is MPEPSKSAPAPK. The tract at residues 1-35 is disordered; it reads MPEPSKSAPAPKKGSKKAITKAQKKDGKKRKRSRK. Residue proline 2 is modified to N-acetylproline. The residue at position 3 (glutamate 3) is an ADP-ribosyl glutamic acid. Position 6 is an N6-(2-hydroxyisobutyryl)lysine; alternate (lysine 6). N6-(beta-hydroxybutyryl)lysine; alternate is present on lysine 6. Lysine 6 carries the N6-acetyllysine; alternate modification. Lysine 6 bears the N6-butyryllysine; alternate mark. An N6-crotonyllysine; alternate modification is found at lysine 6. Lysine 6 is subject to N6-lactoyllysine; alternate. Residue lysine 6 forms a Glycyl lysine isopeptide (Lys-Gly) (interchain with G-Cter in SUMO2); alternate linkage. Serine 7 is modified (ADP-ribosylserine). Residue lysine 12 is modified to N6-(beta-hydroxybutyryl)lysine; alternate. N6-acetyllysine; alternate is present on residues lysine 12 and lysine 13. An N6-crotonyllysine; alternate mark is found at lysine 12 and lysine 13. An N6-lactoyllysine; alternate modification is found at lysine 12. Residue lysine 13 is modified to N6-(2-hydroxyisobutyryl)lysine; alternate. At serine 15 the chain carries Phosphoserine; by STK4/MST1. Lysine 16, lysine 17, lysine 21, and lysine 24 each carry N6-acetyllysine; alternate. 4 positions are modified to N6-crotonyllysine; alternate: lysine 16, lysine 17, lysine 21, and lysine 24. N6-lactoyllysine; alternate is present on residues lysine 16, lysine 17, lysine 21, and lysine 24. 2 positions are modified to N6-(beta-hydroxybutyryl)lysine; alternate: lysine 17 and lysine 21. Lysine 17 is modified (N6-glutaryllysine; alternate). N6-(2-hydroxyisobutyryl)lysine; alternate occurs at positions 21 and 24. Lysine 21 carries the post-translational modification N6-butyryllysine; alternate. Lysine 21 is covalently cross-linked (Glycyl lysine isopeptide (Lys-Gly) (interchain with G-Cter in SUMO2); alternate). The residue at position 25 (lysine 25) is an N6-(2-hydroxyisobutyryl)lysine. Lysine 35 carries the N6-(2-hydroxyisobutyryl)lysine; alternate modification. Lysine 35 is modified (N6-(beta-hydroxybutyryl)lysine; alternate). The residue at position 35 (lysine 35) is an N6-crotonyllysine; alternate. Lysine 35 is subject to N6-glutaryllysine; alternate. Lysine 35 is subject to N6-succinyllysine; alternate. Residue lysine 35 forms a Glycyl lysine isopeptide (Lys-Gly) (interchain with G-Cter in ubiquitin); alternate linkage. The residue at position 36 (glutamate 36) is a PolyADP-ribosyl glutamic acid. Serine 37 carries the post-translational modification Phosphoserine; by AMPK. 3 positions are modified to N6-(2-hydroxyisobutyryl)lysine; alternate: lysine 44, lysine 47, and lysine 58. Lysine 44 bears the N6-lactoyllysine; alternate mark. An N6-glutaryllysine; alternate mark is found at lysine 44 and lysine 47. N6-methyllysine; alternate is present on lysine 47. Position 58 is an N6,N6-dimethyllysine; alternate (lysine 58). Arginine 80 carries the dimethylated arginine modification. The residue at position 86 (lysine 86) is an N6-(2-hydroxyisobutyryl)lysine; alternate. Lysine 86 is modified (N6-(beta-hydroxybutyryl)lysine; alternate). Lysine 86 carries the post-translational modification N6-acetyllysine; alternate. An N6-lactoyllysine; alternate modification is found at lysine 86. Lysine 86 is modified (N6,N6,N6-trimethyllysine; alternate). An omega-N-methylarginine mark is found at arginine 87 and arginine 93. N6-(2-hydroxyisobutyryl)lysine; alternate is present on lysine 109. At lysine 109 the chain carries N6-lactoyllysine; alternate. An N6-glutaryllysine; alternate modification is found at lysine 109. Lysine 109 carries the post-translational modification N6-methyllysine; alternate. Serine 113 carries O-linked (GlcNAc) serine glycosylation. Threonine 116 is modified (phosphothreonine). An N6-(2-hydroxyisobutyryl)lysine; alternate mark is found at lysine 117 and lysine 121. Lysine 117 and lysine 121 each carry N6-(beta-hydroxybutyryl)lysine; alternate. An N6-lactoyllysine; alternate mark is found at lysine 117 and lysine 121. N6-glutaryllysine; alternate is present on residues lysine 117 and lysine 121. Lysine 117 and lysine 121 each carry N6-succinyllysine; alternate. Residue lysine 117 is modified to N6-malonyllysine; alternate. Lysine 117 carries the N6-methylated lysine; alternate modification. Lysine 121 is covalently cross-linked (Glycyl lysine isopeptide (Lys-Gly) (interchain with G-Cter in ubiquitin); alternate).

This sequence belongs to the histone H2B family. As to quaternary structure, the nucleosome is a histone octamer containing two molecules each of H2A, H2B, H3 and H4 assembled in one H3-H4 heterotetramer and two H2A-H2B heterodimers. The octamer wraps approximately 147 bp of DNA. Post-translationally, monoubiquitination at Lys-35 (H2BK34Ub) by the MSL1/MSL2 dimer is required for histone H3 'Lys-4' (H3K4me) and 'Lys-79' (H3K79me) methylation and transcription activation at specific gene loci, such as HOXA9 and MEIS1 loci. Similarly, monoubiquitination at Lys-121 (H2BK120Ub) by the RNF20/40 complex gives a specific tag for epigenetic transcriptional activation and is also prerequisite for histone H3 'Lys-4' and 'Lys-79' methylation. It also functions cooperatively with the FACT dimer to stimulate elongation by RNA polymerase II. H2BK120Ub also acts as a regulator of mRNA splicing: deubiquitination by USP49 is required for efficient cotranscriptional splicing of a large set of exons. Phosphorylation at Ser-37 (H2BS36ph) by AMPK in response to stress promotes transcription. Phosphorylated on Ser-15 (H2BS14ph) by STK4/MST1 during apoptosis; which facilitates apoptotic chromatin condensation. Also phosphorylated on Ser-15 in response to DNA double strand breaks (DSBs), and in correlation with somatic hypermutation and immunoglobulin class-switch recombination. In terms of processing, glcNAcylation at Ser-113 promotes monoubiquitination of Lys-121. It fluctuates in response to extracellular glucose, and associates with transcribed genes. Post-translationally, ADP-ribosylated by PARP1 or PARP2 on Ser-7 (H2BS6ADPr) in response to DNA damage. H2BS6ADPr promotes recruitment of CHD1L. Mono-ADP-ribosylated on Glu-3 (H2BE2ADPr) by PARP3 in response to single-strand breaks. Poly ADP-ribosylation on Glu-36 (H2BE35ADPr) by PARP1 regulates adipogenesis: it inhibits phosphorylation at Ser-37 (H2BS36ph), thereby blocking expression of pro-adipogenetic genes. Crotonylation (Kcr) is specifically present in male germ cells and marks testis-specific genes in post-meiotic cells, including X-linked genes that escape sex chromosome inactivation in haploid cells. Crotonylation marks active promoters and enhancers and confers resistance to transcriptional repressors. It is also associated with post-meiotically activated genes on autosomes. In terms of processing, lactylated in macrophages by EP300/P300 by using lactoyl-CoA directly derived from endogenous or exogenous lactate, leading to stimulates gene transcription.

Its subcellular location is the nucleus. It localises to the chromosome. In terms of biological role, core component of nucleosome. Nucleosomes wrap and compact DNA into chromatin, limiting DNA accessibility to the cellular machineries which require DNA as a template. Histones thereby play a central role in transcription regulation, DNA repair, DNA replication and chromosomal stability. DNA accessibility is regulated via a complex set of post-translational modifications of histones, also called histone code, and nucleosome remodeling. The sequence is that of Histone H2B type 1-B from Homo sapiens (Human).